The sequence spans 515 residues: 2,3-bisphosphoglycerate-independent phosphoglycerate mutase (515 aa).

Mn(2+) is bound by residues aspartate 14 and serine 63. The active site involves serine 63. Substrate contacts are provided by residues histidine 124, 154 to 155, arginine 186, arginine 192, 259 to 262, and lysine 334; these read RD and RADR. Positions 401, 405, 442, 443, and 460 each coordinate Mn(2+).

The protein belongs to the BPG-independent phosphoglycerate mutase family. Mg(2+) is required as a cofactor. It depends on Mn(2+) as a cofactor.

It carries out the reaction (2R)-2-phosphoglycerate = (2R)-3-phosphoglycerate. It participates in carbohydrate degradation; glycolysis; pyruvate from D-glyceraldehyde 3-phosphate: step 3/5. Activity is not affected by 2,3-bisphosphoglycerate. Its function is as follows. Catalyzes the interconversion of 2-phosphoglycerate and 3-phosphoglycerate. The polypeptide is 2,3-bisphosphoglycerate-independent phosphoglycerate mutase (Onchocerca volvulus).